Here is a 208-residue protein sequence, read N- to C-terminus: FMN-dependent NADH:quinone oxidoreductase 3 (208 aa).

This sequence belongs to the azoreductase type 1 family. In terms of assembly, homodimer. It depends on FMN as a cofactor.

It catalyses the reaction 2 a quinone + NADH + H(+) = 2 a 1,4-benzosemiquinone + NAD(+). The enzyme catalyses N,N-dimethyl-1,4-phenylenediamine + anthranilate + 2 NAD(+) = 2-(4-dimethylaminophenyl)diazenylbenzoate + 2 NADH + 2 H(+). In terms of biological role, quinone reductase that provides resistance to thiol-specific stress caused by electrophilic quinones. Functionally, also exhibits azoreductase activity. Catalyzes the reductive cleavage of the azo bond in aromatic azo compounds to the corresponding amines. The sequence is that of FMN-dependent NADH:quinone oxidoreductase 3 from Bacillus cereus (strain ATCC 14579 / DSM 31 / CCUG 7414 / JCM 2152 / NBRC 15305 / NCIMB 9373 / NCTC 2599 / NRRL B-3711).